Consider the following 254-residue polypeptide: MELPVNHFKRKLRAGKSQIGLWCGLPGSYAAEIVAPAGFDWVLFDTEHSPSDVLTVLPQLQAVAPYDVSPVVRPASNDPVLIKRFLDIGVQTLLVPYVQNEEEAKAAVAAIRYPPHGVRGVSALTRATRFGRVPNYARIAEQEICLLLQIETREALGRLEAIATVEGVDGVFIGPADLAASFGHPGQPGHPEVVAAIEDAIGRLKILGKPAGILTPDETFAARCISLGTSFTAVGVDIALLARGSEALAARFAT.

The active-site Proton acceptor is the His-48. A divalent metal cation contacts are provided by Glu-151 and Asp-177.

Belongs to the HpcH/HpaI aldolase family. A divalent metal cation is required as a cofactor.

It carries out the reaction D-glyceraldehyde + pyruvate = 2-dehydro-3-deoxy-L-galactonate. Aldolase which can catalyze in vitro the aldolisation reaction between pyruvate (PA) and D-glyceraldehyde (D-GA) to form 2-dehydro-3-deoxy-L-galactonate. This chain is Pyruvate aldolase, found in Rhizobium etli (strain ATCC 51251 / DSM 11541 / JCM 21823 / NBRC 15573 / CFN 42).